We begin with the raw amino-acid sequence, 89 residues long: Cytochrome b-c1 complex subunit 6, mitochondrial (89 aa).

Residues 1 to 13 (MGLEDERKMLTGS) constitute a mitochondrion transit peptide. The tract at residues 1–27 (MGLEDERKMLTGSGDPKEEEEEELVDP) is disordered. Disulfide bonds link Cys-35–Cys-79 and Cys-51–Cys-65. Lys-40 is subject to N6-acetyllysine. Residue Lys-83 is modified to N6-acetyllysine.

This sequence belongs to the UQCRH/QCR6 family. In terms of assembly, component of the ubiquinol-cytochrome c oxidoreductase (cytochrome b-c1 complex, complex III, CIII), a multisubunit enzyme composed of 11 subunits. The complex is composed of 3 respiratory subunits cytochrome b, cytochrome c1 and Rieske protein UQCRFS1, 2 core protein subunits UQCRC1/QCR1 and UQCRC2/QCR2, and 6 low-molecular weight protein subunits UQCRH/QCR6, UQCRB/QCR7, UQCRQ/QCR8, UQCR10/QCR9, UQCR11/QCR10 and subunit 9, the cleavage product of Rieske protein UQCRFS1. The complex exists as an obligatory dimer and forms supercomplexes (SCs) in the inner mitochondrial membrane with NADH-ubiquinone oxidoreductase (complex I, CI) and cytochrome c oxidase (complex IV, CIV), resulting in different assemblies (supercomplex SCI(1)III(2)IV(1) and megacomplex MCI(2)III(2)IV(2)).

It localises to the mitochondrion inner membrane. Its function is as follows. Component of the ubiquinol-cytochrome c oxidoreductase, a multisubunit transmembrane complex that is part of the mitochondrial electron transport chain which drives oxidative phosphorylation. The respiratory chain contains 3 multisubunit complexes succinate dehydrogenase (complex II, CII), ubiquinol-cytochrome c oxidoreductase (cytochrome b-c1 complex, complex III, CIII) and cytochrome c oxidase (complex IV, CIV), that cooperate to transfer electrons derived from NADH and succinate to molecular oxygen, creating an electrochemical gradient over the inner membrane that drives transmembrane transport and the ATP synthase. The cytochrome b-c1 complex catalyzes electron transfer from ubiquinol to cytochrome c, linking this redox reaction to translocation of protons across the mitochondrial inner membrane, with protons being carried across the membrane as hydrogens on the quinol. In the process called Q cycle, 2 protons are consumed from the matrix, 4 protons are released into the intermembrane space and 2 electrons are passed to cytochrome c. The sequence is that of Cytochrome b-c1 complex subunit 6, mitochondrial (Uqcrh) from Rattus norvegicus (Rat).